We begin with the raw amino-acid sequence, 203 residues long: ATP-dependent Clp protease proteolytic subunit (203 aa).

S107 functions as the Nucleophile in the catalytic mechanism. H132 is an active-site residue.

The protein belongs to the peptidase S14 family. In terms of assembly, fourteen ClpP subunits assemble into 2 heptameric rings which stack back to back to give a disk-like structure with a central cavity, resembling the structure of eukaryotic proteasomes.

It localises to the cytoplasm. It catalyses the reaction Hydrolysis of proteins to small peptides in the presence of ATP and magnesium. alpha-casein is the usual test substrate. In the absence of ATP, only oligopeptides shorter than five residues are hydrolyzed (such as succinyl-Leu-Tyr-|-NHMec, and Leu-Tyr-Leu-|-Tyr-Trp, in which cleavage of the -Tyr-|-Leu- and -Tyr-|-Trp bonds also occurs).. Cleaves peptides in various proteins in a process that requires ATP hydrolysis. Has a chymotrypsin-like activity. Plays a major role in the degradation of misfolded proteins. This chain is ATP-dependent Clp protease proteolytic subunit, found in Shewanella frigidimarina (strain NCIMB 400).